We begin with the raw amino-acid sequence, 496 residues long: Genome polyprotein (496 aa).

Residues Ser1–Ser447 are Extracellular-facing. 6 cysteine pairs are disulfide-bonded: Cys3-Cys30, Cys60-Cys116, Cys60-Cys121, Cys74-Cys105, Cys92-Cys116, and Cys92-Cys121. Positions Asp98–Gly111 are fusion peptide. N-linked (GlcNAc...) asparagine; by host glycosylation occurs at Asn154. 2 disulfide bridges follow: Cys186–Cys290 and Cys307–Cys338. The helical transmembrane segment at Ile448–Gly468 threads the bilayer. At Leu469 to Ser479 the chain is on the cytoplasmic side. The helical transmembrane segment at Phe480–Ala496 threads the bilayer.

As to quaternary structure, homodimer; in the endoplasmic reticulum and Golgi. Post-translationally, N-glycosylated.

The protein resides in the virion membrane. It is found in the host endoplasmic reticulum membrane. Binds to host cell surface receptor and mediates fusion between viral and cellular membranes. Envelope protein is synthesized in the endoplasmic reticulum in the form of heterodimer with protein prM. They play a role in virion budding in the ER, and the newly formed immature particle is covered with 60 spikes composed of heterodimer between precursor prM and envelope protein E. The virion is transported to the Golgi apparatus where the low pH causes dissociation of PrM-E heterodimers and formation of E homodimers. prM-E cleavage is ineficient, and many virions are only partially matured. These uncleaved prM would play a role in immune evasion. In Louping ill virus (strain Negishi 3248/49/P10) (Li), this protein is Genome polyprotein.